Here is a 279-residue protein sequence, read N- to C-terminus: Tryptophan synthase alpha chain (279 aa).

Catalysis depends on proton acceptor residues E50 and D61.

It belongs to the TrpA family. As to quaternary structure, tetramer of two alpha and two beta chains.

The enzyme catalyses (1S,2R)-1-C-(indol-3-yl)glycerol 3-phosphate + L-serine = D-glyceraldehyde 3-phosphate + L-tryptophan + H2O. Its pathway is amino-acid biosynthesis; L-tryptophan biosynthesis; L-tryptophan from chorismate: step 5/5. Functionally, the alpha subunit is responsible for the aldol cleavage of indoleglycerol phosphate to indole and glyceraldehyde 3-phosphate. The sequence is that of Tryptophan synthase alpha chain from Sinorhizobium medicae (strain WSM419) (Ensifer medicae).